The following is a 143-amino-acid chain: D-aminoacyl-tRNA deacylase (143 aa).

Residues Gly-135 to Pro-136 carry the Gly-cisPro motif, important for rejection of L-amino acids motif.

This sequence belongs to the DTD family. Homodimer.

The protein resides in the cytoplasm. The catalysed reaction is glycyl-tRNA(Ala) + H2O = tRNA(Ala) + glycine + H(+). It catalyses the reaction a D-aminoacyl-tRNA + H2O = a tRNA + a D-alpha-amino acid + H(+). In terms of biological role, an aminoacyl-tRNA editing enzyme that deacylates mischarged D-aminoacyl-tRNAs. Also deacylates mischarged glycyl-tRNA(Ala), protecting cells against glycine mischarging by AlaRS. Acts via tRNA-based rather than protein-based catalysis; rejects L-amino acids rather than detecting D-amino acids in the active site. By recycling D-aminoacyl-tRNA to D-amino acids and free tRNA molecules, this enzyme counteracts the toxicity associated with the formation of D-aminoacyl-tRNA entities in vivo and helps enforce protein L-homochirality. The polypeptide is D-aminoacyl-tRNA deacylase (Mycobacterium avium (strain 104)).